The primary structure comprises 396 residues: Lysophospholipid transporter LplT (396 aa).

Residues 1-17 (MSESVHTNTSLWSKGMK) are Periplasmic-facing. The chain crosses the membrane as a helical span at residues 18–38 (AVIVAQFLSAFGDNALLFATL). At 39–52 (ALLKAQFYPEWSQP) the chain is on the cytoplasmic side. Residues 53-73 (ILQMVFVGAYILLAPFVGQVA) form a helical membrane-spanning segment. The Periplasmic segment spans residues 74 to 90 (DSFAKGRVMMFANGLKL). A helical membrane pass occupies residues 91–111 (LGAASICFGINPFLGYTLVGV). The Cytoplasmic portion of the chain corresponds to 112-144 (GAAAYSPAKYGILGELTTGSKLVKANGLMEASA). A helical membrane pass occupies residues 145–165 (IAAILLGSVAGGVLADWHVLV). Position 166 (Ala-166) is a topological domain, periplasmic. Residues 167–187 (LAACALAYGGAVVANIYIPKL) traverse the membrane as a helical segment. The Cytoplasmic portion of the chain corresponds to 188-225 (AARPGQSWNLINMTRSFLNACTSLWCNGETRFSLVGAS). The chain crosses the membrane as a helical span at residues 226–246 (LFWGAGVTLRFLLVLWVPVAL). Topologically, residues 247–255 (GITDNATPT) are periplasmic. The helical transmembrane segment at 256–276 (YLNAMVAIGIVVGAGAAAKLV) threads the bilayer. Topologically, residues 277–279 (TLE) are cytoplasmic. A helical membrane pass occupies residues 280 to 300 (TVSRCMPAGILIGVVVLIFSL). Residues 301-303 (QHE) are Periplasmic-facing. Residues 304–324 (LLPAYALLMLIGVLGGFFVVP) traverse the membrane as a helical segment. Residues 325–342 (LNALLQERGKKSVGAGNA) are Cytoplasmic-facing. Residues 343 to 363 (IAVQNLGENSAMLLMLGIYSL) form a helical membrane-spanning segment. Residues 364–365 (AV) lie on the Periplasmic side of the membrane. The helical transmembrane segment at 366–386 (MVGIPVVPIGIGFGALFALAI) threads the bilayer. Over 387 to 396 (TALWIWQRRH) the chain is Cytoplasmic.

This sequence belongs to the major facilitator superfamily. LplT (TC 2.A.1.42) family.

The protein localises to the cell inner membrane. Catalyzes the facilitated diffusion of 2-acyl-glycero-3-phosphoethanolamine (2-acyl-GPE) into the cell. This is Lysophospholipid transporter LplT from Shigella flexneri serotype 5b (strain 8401).